The chain runs to 509 residues: Telomeric repeat-binding factor 2-interacting protein 1 (509 aa).

Positions 1-91 constitute a BRCT domain; it reads MAALGGLTHS…KLLDVDDYRL (91 aa). The interval 93 to 168 is disordered; that stretch reads GSHGRPRKSQ…RKKENKMDCS (76 aa). Over residues 115-127 the composition is skewed to polar residues; the sequence is VGESSQESDQKQQ. Over residues 159–168 the composition is skewed to basic and acidic residues; the sequence is RKKENKMDCS. The Myb-like domain occupies 185 to 239; sequence RRNVFTEKEDVAIMLYVRENAPHRGTGVSLWKEMEQKQVVKRTWQAIKNRYFRYL. 2 disordered regions span residues 249-359 and 399-423; these read LTDD…ENQD and DLPSSQSQTQVDEVSSSPDASESEG. Basic and acidic residues-rich tracts occupy residues 286–296 and 321–344; these read GVAEKTGEKLS and VEERGQEVTEGAIKRSEGNKKSTE. Residues 401–418 are compositionally biased toward polar residues; sequence PSSQSQTQVDEVSSSPDA. The Nuclear localization signal motif lies at 493 to 509; it reads QKYGADNVAKRVAFLAS.

It belongs to the RAP1 family. In terms of assembly, homodimer. Component of the shelterin complex (telosome). Interacts with terf2; the interaction is direct.

It is found in the nucleus. The protein localises to the chromosome. Its subcellular location is the telomere. In terms of biological role, acts both as a regulator of telomere function and as a transcription regulator. Involved in the regulation of telomere length and protection as a component of the shelterin complex (telosome). Does not bind DNA directly: recruited to telomeric double-stranded 5'-TTAGGG-3' repeats via its interaction with terf2. Independently of its function in telomeres, also acts as a transcription regulator: recruited to extratelomeric 5'-TTAGGG-3' sites via its association with terf2 or other factors, and regulates gene expression. This chain is Telomeric repeat-binding factor 2-interacting protein 1 (terf2ip), found in Xenopus tropicalis (Western clawed frog).